Consider the following 550-residue polypeptide: Glucose import ATP-binding protein TsgD13 (550 aa).

2 ABC transporter domains span residues 7–270 (LRME…VGRE) and 287–533 (LRAR…TGGG). Residue 39–46 (GENGAGKS) participates in ATP binding. A disordered region spans residues 529-550 (MTGGGDATATAGAQVRGLGGSS).

This sequence belongs to the ABC transporter superfamily. In terms of assembly, the complex is composed of two ATP-binding proteins (TsgD13), two transmembrane proteins (TsgB13 and TsgC13) and a solute-binding protein (TsgA13).

The protein resides in the cell membrane. The enzyme catalyses D-glucose(out) + ATP + H2O = D-glucose(in) + ADP + phosphate + H(+). Part of an ABC transporter complex involved in glucose import. Responsible for energy coupling to the transport system. In Haloferax volcanii (strain ATCC 29605 / DSM 3757 / JCM 8879 / NBRC 14742 / NCIMB 2012 / VKM B-1768 / DS2) (Halobacterium volcanii), this protein is Glucose import ATP-binding protein TsgD13 (tsgD13).